Here is a 327-residue protein sequence, read N- to C-terminus: Zinc transport protein ZntB (327 aa).

The Cytoplasmic segment spans residues 1–273 (MEAIKGSDVN…ARRTYTMSLM (273 aa)). The helical transmembrane segment at 274 to 294 (AMVFLPSTFLTGLFGVNLGGI) threads the bilayer. The Periplasmic segment spans residues 295–300 (PGGGWR). The chain crosses the membrane as a helical span at residues 301–321 (FGFSLFCILLVVLIGGVTLWL). The Cytoplasmic segment spans residues 322 to 327 (HRSKWL).

Belongs to the CorA metal ion transporter (MIT) (TC 1.A.35) family.

It localises to the cell inner membrane. It carries out the reaction Zn(2+)(out) + H(+)(out) = Zn(2+)(in) + H(+)(in). Functionally, zinc transporter. Acts as a Zn(2+):proton symporter, which likely mediates zinc ion uptake. The sequence is that of Zinc transport protein ZntB from Salmonella agona (strain SL483).